Consider the following 486-residue polypeptide: Glutamate--tRNA ligase (486 aa).

Positions 11–21 match the 'HIGH' region motif; the sequence is PSPTGVVHIGN. The 'KMSKS' region signature appears at 255 to 259; that stretch reads KLSKR. Lysine 258 is a binding site for ATP.

The protein belongs to the class-I aminoacyl-tRNA synthetase family. Glutamate--tRNA ligase type 1 subfamily. As to quaternary structure, monomer.

The protein resides in the cytoplasm. It carries out the reaction tRNA(Glu) + L-glutamate + ATP = L-glutamyl-tRNA(Glu) + AMP + diphosphate. In terms of biological role, catalyzes the attachment of glutamate to tRNA(Glu) in a two-step reaction: glutamate is first activated by ATP to form Glu-AMP and then transferred to the acceptor end of tRNA(Glu). The protein is Glutamate--tRNA ligase of Streptococcus pneumoniae (strain CGSP14).